A 204-amino-acid chain; its full sequence is Ribonuclease HII (204 aa).

An RNase H type-2 domain is found at 1–197; the sequence is MILGIDEAGR…KNCILNPKLL (197 aa). A divalent metal cation contacts are provided by D6, E7, and D103.

The protein belongs to the RNase HII family. Mn(2+) is required as a cofactor. It depends on Mg(2+) as a cofactor.

Its subcellular location is the cytoplasm. It catalyses the reaction Endonucleolytic cleavage to 5'-phosphomonoester.. In terms of biological role, endonuclease that specifically degrades the RNA of RNA-DNA hybrids. The polypeptide is Ribonuclease HII (Helicobacter pylori (strain P12)).